A 252-amino-acid chain; its full sequence is LexA repressor (252 aa).

A disordered region spans residues 1-46 (MPEENRGGHQPYTEESSVSALHPVRTDDSVGSSAEQTGDAPTLTER). Residues 67–87 (IREIGEAVGLSSPSSVAHQLK) constitute a DNA-binding region (H-T-H motif). Catalysis depends on for autocatalytic cleavage activity residues Ser176 and Lys213.

The protein belongs to the peptidase S24 family. As to quaternary structure, homodimer.

It carries out the reaction Hydrolysis of Ala-|-Gly bond in repressor LexA.. In terms of biological role, represses a number of genes involved in the response to DNA damage (SOS response), including recA and lexA. In the presence of single-stranded DNA, RecA interacts with LexA causing an autocatalytic cleavage which disrupts the DNA-binding part of LexA, leading to derepression of the SOS regulon and eventually DNA repair. This chain is LexA repressor, found in Thermobifida fusca (strain YX).